The sequence spans 276 residues: BES1/BZR1 homolog protein 1 (276 aa).

3 disordered regions span residues 1 to 30 (MTASGGGSTAATGRMPTWKERENNKKRERR), 76 to 125 (TTYR…PTRF), and 155 to 191 (SAPVTPPISSPRRSNPRLPRWQSSNFPVSAPSSPTRR). Positions 14 to 87 (RMPTWKEREN…YRKGSRPTET (74 aa)) are required for DNA-binding. A compositionally biased stretch (polar residues) spans 84 to 103 (PTETTVPCSSIQLSPQSSAF). Over residues 104–122 (QSPIPSYQASPSSSSYPSP) the composition is skewed to low complexity. T159 carries the phosphothreonine modification. The span at 164–174 (SPRRSNPRLPR) shows a compositional bias: low complexity. A compositionally biased stretch (polar residues) spans 175–189 (WQSSNFPVSAPSSPT).

The protein belongs to the BZR/LAT61 family. Phosphorylated. Phosphorylation increases protein degradation.

This chain is BES1/BZR1 homolog protein 1 (BEH1), found in Arabidopsis thaliana (Mouse-ear cress).